Consider the following 3620-residue polypeptide: Cubilin (3620 aa).

Positions 1–20 are cleaved as a signal peptide; sequence MSSPFLWSLIILLTFAESNG. Positions 21-32 are cleaved as a propeptide — removed in mature form; sequence EAGGFELQRQKR. Positions 39 to 46 are interaction with AMN; it reads PRMATERG. Asparagine 102 carries N-linked (GlcNAc...) asparagine glycosylation. An EGF-like 1 domain is found at 129–165; it reads DKKVCSSNPCQNGGTCLNLHDSFFCICPSQWKGPLCS. Intrachain disulfides connect cysteine 133–cysteine 144, cysteine 138–cysteine 153, cysteine 155–cysteine 164, cysteine 171–cysteine 187, cysteine 181–cysteine 196, and cysteine 198–cysteine 207. The region spanning 167 to 208 is the EGF-like 2; calcium-binding domain; it reads DVNECQIYSGTPLGCQNGATCENTAGSYSCLCSPETHGPQCA. The N-linked (GlcNAc...) asparagine glycan is linked to asparagine 253. Positions 260-301 constitute an EGF-like 3; calcium-binding domain; that stretch reads DIDECNLQHAPCSPLVQCFNTQGSFYCGACPTGWQGNGYSCQ. 19 cysteine pairs are disulfide-bonded: cysteine 264-cysteine 277, cysteine 271-cysteine 286, cysteine 289-cysteine 300, cysteine 306-cysteine 321, cysteine 313-cysteine 330, cysteine 333-cysteine 344, cysteine 350-cysteine 363, cysteine 357-cysteine 373, cysteine 396-cysteine 406, cysteine 401-cysteine 415, cysteine 417-cysteine 426, cysteine 433-cysteine 444, cysteine 438-cysteine 453, cysteine 455-cysteine 464, cysteine 471-cysteine 497, cysteine 524-cysteine 546, cysteine 587-cysteine 613, cysteine 640-cysteine 662, and cysteine 705-cysteine 730. The region spanning 302–345 is the EGF-like 4; calcium-binding domain; the sequence is DIDECKINNGGCSVVPPVMCVNTLGSYHCQACPPGYQGDGRVCT. 2 consecutive EGF-like domains span residues 346–382 and 392–427; these read VIDI…YTGN and LSDT…INCT. An N-linked (GlcNAc...) asparagine glycan is attached at asparagine 425. The 37-residue stretch at 429-465 folds into the EGF-like 7; calcium-binding domain; it reads NINECLSNPCFNGGTCVDGVNAFSCECTRFWTGFLCQ. CUB domains lie at 471-583, 587-699, 705-812, 813-924, 928-1038, 1044-1158, 1162-1274, 1275-1386, 1388-1503, 1507-1616, 1617-1731, 1735-1847, and 1849-1960; these read CGGS…WETQ, CGGI…YLTS, CGGN…YQVA, CGGE…FSAA, CGEI…YEAT, CMED…WDGS, CGGN…YQQT, CRNV…WFIH, CGGE…WQAV, CGGI…FNQV, CGGH…YAAS, CGGT…FTKI, and GNDN…WFAV. N-linked (GlcNAc...) asparagine glycosylation is found at asparagine 708 and asparagine 745. Cysteine 757 and cysteine 775 are joined by a disulfide. Residue asparagine 777 is glycosylated (N-linked (GlcNAc...) asparagine). Cysteine 813 and cysteine 838 form a disulfide bridge. Residue asparagine 853 is glycosylated (N-linked (GlcNAc...) asparagine). 2 cysteine pairs are disulfide-bonded: cysteine 865-cysteine 887 and cysteine 928-cysteine 954. Residue asparagine 953 is glycosylated (N-linked (GlcNAc...) asparagine). Glutamate 976 provides a ligand contact to Ca(2+). N-linked (GlcNAc...) asparagine glycosylation occurs at asparagine 980. Cysteine 981 and cysteine 1001 form a disulfide bridge. Aspartate 984, aspartate 1023, aspartate 1025, and leucine 1026 together coordinate Ca(2+). A disulfide bridge links cysteine 1044 with cysteine 1070. Ca(2+)-binding residues include glutamate 1092, aspartate 1102, and aspartate 1143. Cysteine 1099 and cysteine 1121 are oxidised to a cystine. A disulfide bond links cysteine 1162 and cysteine 1188. Residue asparagine 1165 is glycosylated (N-linked (GlcNAc...) asparagine). A Ca(2+)-binding site is contributed by glutamate 1210. Asparagine 1214 carries N-linked (GlcNAc...) asparagine glycosylation. Cysteine 1215 and cysteine 1237 are oxidised to a cystine. Positions 1218, 1259, and 1262 each coordinate Ca(2+). A disulfide bridge links cysteine 1275 with cysteine 1303. 2 N-linked (GlcNAc...) asparagine glycosylation sites follow: asparagine 1304 and asparagine 1316. Ca(2+) is bound at residue glutamate 1325. A glycan (N-linked (GlcNAc...) asparagine) is linked at asparagine 1329. A disulfide bond links cysteine 1330 and cysteine 1348. Aspartate 1333, aspartate 1370, and valine 1372 together coordinate Ca(2+). Cystine bridges form between cysteine 1388-cysteine 1414 and cysteine 1441-cysteine 1463. The N-linked (GlcNAc...) asparagine glycan is linked to asparagine 1497. Cysteine 1507 and cysteine 1533 form a disulfide bridge. Asparagine 1548 is a glycosylation site (N-linked (GlcNAc...) asparagine). 5 disulfide bridges follow: cysteine 1560–cysteine 1578, cysteine 1617–cysteine 1644, cysteine 1672–cysteine 1694, cysteine 1735–cysteine 1761, and cysteine 1788–cysteine 1809. An N-linked (GlcNAc...) asparagine glycan is attached at asparagine 1643. N-linked (GlcNAc...) asparagine glycans are attached at residues asparagine 1799, asparagine 1816, and asparagine 1882. Cysteine 1902 and cysteine 1924 are disulfide-bonded. Asparagine 1961 carries N-linked (GlcNAc...) asparagine glycosylation. 2 disulfides stabilise this stretch: cysteine 1975-cysteine 2003 and cysteine 2029-cysteine 2051. 14 CUB domains span residues 1975 to 2088, 2089 to 2210, 2214 to 2331, 2333 to 2445, 2449 to 2562, 2567 to 2684, 2686 to 2798, 2802 to 2916, 2917 to 3032, 3034 to 3147, 3154 to 3271, 3275 to 3392, 3392 to 3504, and 3508 to 3620; these read CGGF…FHKS, CGGY…YEAK, CGGN…YAIA, CGGR…FESS, CGGE…YTSS, CGGS…YSFT, CGGI…WNTQ, CGGI…FVSR, CGGN…YKIT, CGGV…FQQT, CGGY…YTTV, CGGT…IAGC, CNRE…WTSS, and CGGT…TWDS. N-linked (GlcNAc...) asparagine glycosylation is found at asparagine 2082 and asparagine 2114. 3 disulfides stabilise this stretch: cysteine 2089–cysteine 2115, cysteine 2214–cysteine 2244, and cysteine 2272–cysteine 2294. Asparagine 2317 carries N-linked (GlcNAc...) asparagine glycosylation. Cysteine 2333 and cysteine 2360 are joined by a disulfide. N-linked (GlcNAc...) asparagine glycans are attached at residues asparagine 2383 and asparagine 2397. Intrachain disulfides connect cysteine 2387–cysteine 2408, cysteine 2449–cysteine 2475, and cysteine 2502–cysteine 2524. 4 N-linked (GlcNAc...) asparagine glycosylation sites follow: asparagine 2528, asparagine 2578, asparagine 2589, and asparagine 2607. Cysteine 2567 and cysteine 2596 are disulfide-bonded. Intrachain disulfides connect cysteine 2625/cysteine 2646, cysteine 2686/cysteine 2712, cysteine 2739/cysteine 2761, cysteine 2802/cysteine 2828, cysteine 2857/cysteine 2880, cysteine 2917/cysteine 2943, and cysteine 2974/cysteine 2996. Asparagine 2810 carries an N-linked (GlcNAc...) asparagine glycan. 3 N-linked (GlcNAc...) asparagine glycosylation sites follow: asparagine 2920, asparagine 2942, and asparagine 2986. Threonine 3005 is modified (phosphothreonine). Cystine bridges form between cysteine 3034/cysteine 3061 and cysteine 3088/cysteine 3110. Asparagine 3039, asparagine 3100, and asparagine 3122 each carry an N-linked (GlcNAc...) asparagine glycan. 2 disulfide bridges follow: cysteine 3154-cysteine 3182 and cysteine 3212-cysteine 3234. Asparagine 3265, asparagine 3280, and asparagine 3292 each carry an N-linked (GlcNAc...) asparagine glycan. 2 disulfides stabilise this stretch: cysteine 3275–cysteine 3303 and cysteine 3329–cysteine 3351. Asparagine 3354 is a glycosylation site (N-linked (GlcNAc...) asparagine). A disulfide bond links cysteine 3392 and cysteine 3418. 3 N-linked (GlcNAc...) asparagine glycosylation sites follow: asparagine 3427, asparagine 3454, and asparagine 3530. 3 disulfides stabilise this stretch: cysteine 3445–cysteine 3467, cysteine 3508–cysteine 3534, and cysteine 3561–cysteine 3583.

In terms of assembly, interacts with AMN. Component of the cubam complex composed of one CUBN trimer and one AMN chain. The cubam complex can dimerize. Interacts with LRP2 in a dual-receptor complex in a calcium-dependent manner. Found in a complex with PID1/PCLI1, LRP1 and CUBNI. Interacts with LRP1 and PID1/PCLI1. Post-translationally, the precursor is cleaved by a trans-Golgi proteinase furin, removing a propeptide. In terms of processing, N-glycosylated. In terms of tissue distribution, detected in kidney cortex (at protein level). Detected in kidney, duodenum and jejunum.

It is found in the apical cell membrane. It localises to the cell membrane. Its subcellular location is the membrane. The protein localises to the coated pit. The protein resides in the endosome. It is found in the lysosome membrane. Functionally, endocytic receptor which plays a role in lipoprotein, vitamin and iron metabolism by facilitating their uptake. Acts together with LRP2 to mediate endocytosis of high-density lipoproteins, GC, hemoglobin, ALB, TF and SCGB1A1. Acts together with AMN to mediate endocytosis of the CBLIF-cobalamin complex. Binds to ALB, MB, Kappa and lambda-light chains, TF, hemoglobin, GC, SCGB1A1, APOA1, high density lipoprotein, and the CBLIF-cobalamin complex. Ligand binding requires calcium. Serves as important transporter in several absorptive epithelia, including intestine, renal proximal tubules and embryonic yolk sac. May play an important role in the development of the peri-implantation embryo through internalization of APOA1 and cholesterol. Binds to LGALS3 at the maternal-fetal interface. This is Cubilin (CUBN) from Canis lupus familiaris (Dog).